We begin with the raw amino-acid sequence, 154 residues long: Prefoldin subunit 2 (154 aa).

Disordered regions lie at residues 1–20 (MADS…GKGA) and 126–154 (LMGE…VLVS). Residues 9 to 18 (GKSGGSGAGK) show a composition bias toward gly residues. Basic and acidic residues predominate over residues 126-139 (LMGEDEKPAAKENS). A compositionally biased stretch (low complexity) spans 140–154 (EGAGAKASSAGVLVS).

Belongs to the prefoldin subunit beta family. As to quaternary structure, heterohexamer of two PFD-alpha type and four PFD-beta type subunits. Component of the PAQosome complex which is responsible for the biogenesis of several protein complexes and which consists of R2TP complex members RUVBL1, RUVBL2, RPAP3 and PIH1D1, URI complex members PFDN2, PFDN6, PDRG1, UXT and URI1 as well as ASDURF, POLR2E and DNAAF10/WDR92. Interacts with URI1; the interaction is phosphorylation-dependent and occurs in a growth-dependent manner.

It localises to the nucleus. It is found in the cytoplasm. The protein resides in the mitochondrion. Binds specifically to cytosolic chaperonin (c-CPN) and transfers target proteins to it. Binds to nascent polypeptide chain and promotes folding in an environment in which there are many competing pathways for nonnative proteins. The chain is Prefoldin subunit 2 (Pfdn2) from Mus musculus (Mouse).